The sequence spans 426 residues: MANKPDHHHHHHQSSRRLMLVLYFTSVLGIGFIAAFLCLSSSIPSVSAVFSIWVPVNRPEIQIPIIDSKIVQKRSKQSNDTKDHVRFLSAIFADIPAPELKWEEMESAPVPRLDGYSVQINNLLYVFSGYGSLDYVHSHVDVFNFTDNKWCDRFHTPKEMANSHLGIVTDGRYVYVVSGQLGPQCRGPTSRSFVLDSFTKTWLEFPSLPAPRYAPATQIWRGRLHVMGGSKENRNAVAFDHWSIAVKDGKALDEWREEVPIPRGGPHRACVVANDKLLVIGGQEGDFMAKPNSPIFKCSRRREIFNGEVYMMDEEMKWKMLPPMPKNNSHIESAWIIVNNSIVIVGGTTDWHPVTKRLVLVGEIFRFQLDTLTWSVIGRLPYRVKTAMAGFWNGYLYFTSGQRDRGPDNPQPGKVIGEMWRTKLKF.

A helical transmembrane segment spans residues 18–38; that stretch reads LMLVLYFTSVLGIGFIAAFLC. Kelch repeat units lie at residues 123–170, 173–222, 224–275, 276–338, and 341–394; these read LLYV…IVTD, YVYV…IWRG, LHVM…VAND, KLLV…WIIV, and SIVI…FWNG.

It localises to the membrane. This chain is Kelch repeat-containing protein At3g27220, found in Arabidopsis thaliana (Mouse-ear cress).